A 131-amino-acid chain; its full sequence is Fluoride-specific ion channel FluC (131 aa).

The next 4 membrane-spanning stretches (helical) occupy residues 10–30 (AAVA…SGLV), 36–56 (FPMG…FLTW), 71–91 (LATV…YETV), and 99–119 (VLSI…VLGG). Positions 78 and 81 each coordinate Na(+).

The protein belongs to the fluoride channel Fluc/FEX (TC 1.A.43) family.

The protein localises to the cell membrane. It catalyses the reaction fluoride(in) = fluoride(out). Its activity is regulated as follows. Na(+) is not transported, but it plays an essential structural role and its presence is essential for fluoride channel function. Fluoride-specific ion channel. Important for reducing fluoride concentration in the cell, thus reducing its toxicity. This is Fluoride-specific ion channel FluC from Methanopyrus kandleri (strain AV19 / DSM 6324 / JCM 9639 / NBRC 100938).